The chain runs to 203 residues: Ribonuclease HII (203 aa).

The RNase H type-2 domain occupies 15-201 (LLVAGLDEAG…VAQAPLRFPE (187 aa)). 3 residues coordinate a divalent metal cation: D21, E22, and D111.

Belongs to the RNase HII family. The cofactor is Mn(2+). Mg(2+) serves as cofactor.

It is found in the cytoplasm. The catalysed reaction is Endonucleolytic cleavage to 5'-phosphomonoester.. Functionally, endonuclease that specifically degrades the RNA of RNA-DNA hybrids. This chain is Ribonuclease HII, found in Thermus thermophilus (strain ATCC BAA-163 / DSM 7039 / HB27).